The following is a 962-amino-acid chain: Vacuolar membrane protease (962 aa).

The Cytoplasmic segment spans residues 1-15 (MVSSRRGFNPIAFTP). Residues 16–36 (WPVTILSSLVYLALIIPIIVV) traverse the membrane as a helical segment. Topologically, residues 37–390 (HHLVPPAPKE…FQLNTLFGHS (354 aa)) are vacuolar. N-linked (GlcNAc...) asparagine glycans are attached at residues N110 and N113. The Zn(2+) site is built by H169 and D181. Catalysis depends on E215, which acts as the Proton acceptor. Positions 216, 241, and 314 each coordinate Zn(2+). The chain crosses the membrane as a helical span at residues 391 to 411 (VALLVVAPLLLIITSVALFAV). Residues 412–440 (DKMYMFSMYTYISESGGQVSLYGLRGMFR) lie on the Cytoplasmic side of the membrane. Residues 441–461 (FPLILGISTALTIALAFLIMK) form a helical membrane-spanning segment. Residues 462-472 (VNPFIIYSSPY) are Vacuolar-facing. A helical transmembrane segment spans residues 473 to 493 (AVWSMMLSTCMFFAWFISCVA). Residues 494-503 (DFARPSALHR) are Cytoplasmic-facing. The chain crosses the membrane as a helical span at residues 504-524 (AYSFSWMFGIMWVFLVIATVY). Topologically, residues 525–534 (QKQHGIASSY) are vacuolar. A helical membrane pass occupies residues 535-555 (FIVFYFAGVAVATWISYLELF). At 556-667 (GLPKTQDYAR…WSIYLMSSAW (112 aa)) the chain is on the cytoplasmic side. The disordered stretch occupies residues 568 to 617 (GRLSDRTPSSDSHFLAPSADELPSSSSAAGRDFNPEDVEDEEPTESTSLL). Acidic residues predominate over residues 602–611 (PEDVEDEEPT). Residues 668–688 (ILQFLLVAPIVIILLGQLGLF) form a helical membrane-spanning segment. The Vacuolar portion of the chain corresponds to 689 to 704 (LTSATYQIGADGGSQL). The helical transmembrane segment at 705–725 (VIYIGIAVLSVLILLPLFPFI) threads the bilayer. The Cytoplasmic segment spans residues 726 to 731 (HRFTYH). A helical transmembrane segment spans residues 732 to 752 (IPTFLLFILIGTLVYNLTAFP). At 753 to 962 (FSHSNRLKLA…LVEGSYSFKL (210 aa)) the chain is on the vacuolar side. N834 carries N-linked (GlcNAc...) asparagine glycosylation.

It belongs to the peptidase M28 family. Zn(2+) is required as a cofactor.

The protein localises to the vacuole membrane. In terms of biological role, may be involved in vacuolar sorting and osmoregulation. This is Vacuolar membrane protease from Arthroderma benhamiae (strain ATCC MYA-4681 / CBS 112371) (Trichophyton mentagrophytes).